A 141-amino-acid polypeptide reads, in one-letter code: Nucleoside diphosphate kinase (141 aa).

6 residues coordinate ATP: lysine 11, phenylalanine 59, arginine 87, threonine 93, arginine 104, and asparagine 114. Histidine 117 (pros-phosphohistidine intermediate) is an active-site residue.

It belongs to the NDK family. In terms of assembly, homotetramer. The cofactor is Mg(2+).

Its subcellular location is the cytoplasm. The enzyme catalyses a 2'-deoxyribonucleoside 5'-diphosphate + ATP = a 2'-deoxyribonucleoside 5'-triphosphate + ADP. It carries out the reaction a ribonucleoside 5'-diphosphate + ATP = a ribonucleoside 5'-triphosphate + ADP. Major role in the synthesis of nucleoside triphosphates other than ATP. The ATP gamma phosphate is transferred to the NDP beta phosphate via a ping-pong mechanism, using a phosphorylated active-site intermediate. This is Nucleoside diphosphate kinase from Variovorax paradoxus (strain S110).